Here is a 124-residue protein sequence, read N- to C-terminus: Small ribosomal subunit protein uS12 (124 aa).

The tract at residues 8–28 (IRSAREKTDKKTKSPALKSCP) is disordered. A compositionally biased stretch (basic and acidic residues) spans 10 to 19 (SAREKTDKKT). Asp-89 is modified (3-methylthioaspartic acid).

The protein belongs to the universal ribosomal protein uS12 family. As to quaternary structure, part of the 30S ribosomal subunit. Contacts proteins S8 and S17. May interact with IF1 in the 30S initiation complex.

Functionally, with S4 and S5 plays an important role in translational accuracy. Its function is as follows. Interacts with and stabilizes bases of the 16S rRNA that are involved in tRNA selection in the A site and with the mRNA backbone. Located at the interface of the 30S and 50S subunits, it traverses the body of the 30S subunit contacting proteins on the other side and probably holding the rRNA structure together. The combined cluster of proteins S8, S12 and S17 appears to hold together the shoulder and platform of the 30S subunit. This is Small ribosomal subunit protein uS12 from Arthrospira platensis (Spirulina platensis).